A 345-amino-acid polypeptide reads, in one-letter code: L-threonine 3-dehydrogenase (345 aa).

Cys38 lines the Zn(2+) pocket. Active-site charge relay system residues include Thr40 and His43. The Zn(2+) site is built by His63, Glu64, Cys93, Cys96, Cys99, and Cys107. Residues Ile176, Asp196, Arg201, 263–265 (LGT), and 287–288 (VT) contribute to the NAD(+) site.

It belongs to the zinc-containing alcohol dehydrogenase family. Homotetramer. It depends on Zn(2+) as a cofactor.

The protein localises to the cytoplasm. The enzyme catalyses L-threonine + NAD(+) = (2S)-2-amino-3-oxobutanoate + NADH + H(+). The protein operates within amino-acid degradation; L-threonine degradation via oxydo-reductase pathway; glycine from L-threonine: step 1/2. Catalyzes the NAD(+)-dependent oxidation of L-threonine to 2-amino-3-ketobutyrate. This chain is L-threonine 3-dehydrogenase, found in Cutibacterium acnes (strain DSM 16379 / KPA171202) (Propionibacterium acnes).